The primary structure comprises 176 residues: Cytochrome c oxidase subunit 5b-1, mitochondrial (176 aa).

The N-terminal 55 residues, 1-55 (MWRRIVSSQLKTLAADVVAASPRRSIAATTRPVGFYLAANRSAISASSFVIPRRF), are a transit peptide targeting the mitochondrion. The Zn(2+) site is built by C122, C146, and C149. Residues 157-176 (VVGPGGPPDGHGDEDDEHHH) are disordered.

It belongs to the cytochrome c oxidase subunit 5B (TC 3.D.4.11) family.

The protein localises to the mitochondrion inner membrane. This protein is one of the nuclear-coded polypeptide chains of cytochrome c oxidase, the terminal oxidase in mitochondrial electron transport. This chain is Cytochrome c oxidase subunit 5b-1, mitochondrial (COX5B-1), found in Arabidopsis thaliana (Mouse-ear cress).